The chain runs to 258 residues: Type II restriction enzyme HindII (258 aa).

It carries out the reaction Endonucleolytic cleavage of DNA to give specific double-stranded fragments with terminal 5'-phosphates.. Functionally, a P subtype restriction enzyme that recognizes the double-stranded sequence 5'-GTYRAC-3' and cleaves after Y-3. The chain is Type II restriction enzyme HindII (hindIIR) from Haemophilus influenzae (strain ATCC 51907 / DSM 11121 / KW20 / Rd).